The sequence spans 87 residues: Phosphocarrier protein HPr (87 aa).

One can recognise an HPr domain in the interval 1-87 (MEKIFKVTSD…ETMKNEGLGE (87 aa)). Residue His14 is the Pros-phosphohistidine intermediate; alternate of the active site. Tele-phosphohistidine; alternate is present on His14. Residue Ser45 is modified to Phosphoserine; by HPrK/P.

This sequence belongs to the HPr family. Post-translationally, the form phosphorylated at the tele nitrogen (N(epsilon)2), instead of the expected pros nitrogen (N(delta)1), of His-14 is not able to transfer its phosphoryl group to the B.subtilis EIIA-Glc domain. This form may be inactive in PTS-catalyzed sugar transport or target an as yet unknown acceptor molecule in an alternative metabolic process.

Its subcellular location is the cytoplasm. Phosphorylation on Ser-45 inhibits the phosphoryl transfer from enzyme I to HPr. In terms of biological role, general (non sugar-specific) component of the phosphoenolpyruvate-dependent sugar phosphotransferase system (sugar PTS). This major carbohydrate active-transport system catalyzes the phosphorylation of incoming sugar substrates concomitantly with their translocation across the cell membrane. The phosphoryl group from phosphoenolpyruvate (PEP) is transferred to the phosphoryl carrier protein HPr by enzyme I. Phospho-HPr then transfers it to the PTS EIIA domain. Its function is as follows. P-Ser-HPr interacts with the catabolite control protein A (CcpA), forming a complex that binds to DNA at the catabolite response elements cre, operator sites preceding a large number of catabolite-regulated genes. Thus, P-Ser-HPr is a corepressor in carbon catabolite repression (CCR), a mechanism that allows bacteria to coordinate and optimize the utilization of available carbon sources. P-Ser-HPr mediates glucose catabolite repression of cry4A toxin expression. In Bacillus thuringiensis subsp. israelensis, this protein is Phosphocarrier protein HPr (ptsH).